The primary structure comprises 476 residues: UDP-N-acetylmuramate--L-alanine ligase (476 aa).

125–131 (GTHGKTT) is a binding site for ATP.

It belongs to the MurCDEF family.

It is found in the cytoplasm. The enzyme catalyses UDP-N-acetyl-alpha-D-muramate + L-alanine + ATP = UDP-N-acetyl-alpha-D-muramoyl-L-alanine + ADP + phosphate + H(+). It participates in cell wall biogenesis; peptidoglycan biosynthesis. In terms of biological role, cell wall formation. The polypeptide is UDP-N-acetylmuramate--L-alanine ligase (Actinobacillus succinogenes (strain ATCC 55618 / DSM 22257 / CCUG 43843 / 130Z)).